A 1014-amino-acid polypeptide reads, in one-letter code: MICAL-like protein 2 (1014 aa).

Residues 1-107 form the Calponin-homology (CH) domain; that stretch reads MAAIKALQEW…YVSQYYNYFH (107 aa). The segment at 1 to 261 is forms an intramolecular interaction with the C-terminal coiled coil domain keeping the protein in a closed conformation; the sequence is MAAIKALQEW…KLSNLASRQP (261 aa). Phosphoserine is present on residues Ser-110, Ser-144, and Ser-154. Positions 114 to 181 are disordered; the sequence is GMAGMKRPSS…PSPKAAPGTV (68 aa). The region spanning 187–249 is the LIM zinc-binding domain; it reads SICGVCGKHV…THHSSEAVSV (63 aa). Ser-250 is subject to Phosphoserine. Residues 262-394 form a necessary and sufficient for interaction with actinins region; that stretch reads GGGIADTRPI…QGQAASKGVK (133 aa). Residues 262–810 are mediates targeting to the cell plasma membrane; the sequence is GGGIADTRPI…QDDQTRSCKE (549 aa). Disordered regions lie at residues 311-450 and 609-780; these read LTPP…SRVP and TLPK…RRKK. Residues 332 to 355 are compositionally biased toward polar residues; it reads STVTTTSANSKATTHVTNSSPVGW. Positions 356 to 368 are enriched in low complexity; sequence SSSAQSSTGTSGS. Over residues 384–398 the composition is skewed to polar residues; that stretch reads PQGQAASKGVKTQLN. 2 stretches are compositionally biased toward low complexity: residues 399 to 419 and 438 to 447; these read SSTD…SSRT and PASSSSSHAS. 2 stretches are compositionally biased toward polar residues: residues 624–633 and 646–656; these read LSHSTTQAFS and VGSTSWTSVSL. 2 stretches are compositionally biased toward basic and acidic residues: residues 701-711 and 720-737; these read EGWRARLKPVD and LEQK…DTPR. Residues 747-758 are compositionally biased toward polar residues; sequence IHITLTPIQQKR. At Thr-759 the chain carries Phosphothreonine. 2 positions are modified to phosphoserine: Ser-773 and Ser-837. The segment at 811-918 is forms an intramolecular interaction with the N-terminal Calponin-homology and LIM zinc-binding domains-containing region keeping the protein in a closed conformation; sequence KTATWGTRES…LMYKSKDQCL (108 aa). In terms of domain architecture, bMERB spans 838–985; it reads PVRLHPNYIS…EQEEDQMLES (148 aa). A coiled-coil region spans residues 845 to 885; that stretch reads YISQEELQRQLQDIERQLDALELRGVELEKRLRAAEGDASE. Residues 918-1014 form a mediates interaction with RAB13 and is required for transition from the closed to the open conformation region; that stretch reads LEERQLDLQG…WSSKSKSGQT (97 aa).

In terms of assembly, interacts with RAB13 (GTP-bound form); competes with RAB8A and is involved in tight junctions assembly. Interacts with RAB8A; competes with RAB13 and is involved in E-cadherin endocytic recycling. Interacts with RAB8B. Interacts (preferentially in opened conformation) with ACTN1 and ACTN4; stimulated by RAB13 activation. Interacts (via calponin-homology (CH) domain) with the filamins FLNA, FLNB and FLNC (via actin-binding domain).

It is found in the cell membrane. The protein resides in the cell junction. The protein localises to the tight junction. Its subcellular location is the recycling endosome. It localises to the cell projection. It is found in the neuron projection. The protein resides in the cytoplasm. The protein localises to the cytoskeleton. In terms of biological role, effector of small Rab GTPases which is involved in junctional complexes assembly through the regulation of cell adhesion molecules transport to the plasma membrane and actin cytoskeleton reorganization. Regulates the endocytic recycling of occludins, claudins and E-cadherin to the plasma membrane and may thereby regulate the establishment of tight junctions and adherens junctions. In parallel, may regulate actin cytoskeleton reorganization directly through interaction with F-actin or indirectly through actinins and filamins. Most probably involved in the processes of epithelial cell differentiation, cell spreading and neurite outgrowth. Undergoes liquid-liquid phase separation to form tubular recycling endosomes. Plays 2 sequential roles in the biogenesis of tubular recycling endosomes: first organizes phase separation and then the closed form formed by interaction with RAB8A promotes endosomal tubulation. This Rattus norvegicus (Rat) protein is MICAL-like protein 2 (Micall2).